Reading from the N-terminus, the 73-residue chain is Translation initiation factor IF-1 (73 aa).

The S1-like domain occupies 1–73 (MPKKDGAIEI…SRGRIVYRYK (73 aa)).

This sequence belongs to the IF-1 family. In terms of assembly, component of the 30S ribosomal translation pre-initiation complex which assembles on the 30S ribosome in the order IF-2 and IF-3, IF-1 and N-formylmethionyl-tRNA(fMet); mRNA recruitment can occur at any time during PIC assembly.

It is found in the cytoplasm. Its function is as follows. One of the essential components for the initiation of protein synthesis. Stabilizes the binding of IF-2 and IF-3 on the 30S subunit to which N-formylmethionyl-tRNA(fMet) subsequently binds. Helps modulate mRNA selection, yielding the 30S pre-initiation complex (PIC). Upon addition of the 50S ribosomal subunit IF-1, IF-2 and IF-3 are released leaving the mature 70S translation initiation complex. In Frankia alni (strain DSM 45986 / CECT 9034 / ACN14a), this protein is Translation initiation factor IF-1.